Here is a 255-residue protein sequence, read N- to C-terminus: Sulfur carrier protein FdhD (255 aa).

Cys103 acts as the Cysteine persulfide intermediate in catalysis.

It belongs to the FdhD family.

Its subcellular location is the cytoplasm. Its function is as follows. Required for formate dehydrogenase (FDH) activity. Acts as a sulfur carrier protein that transfers sulfur from IscS to the molybdenum cofactor prior to its insertion into FDH. In Sulfurisphaera tokodaii (strain DSM 16993 / JCM 10545 / NBRC 100140 / 7) (Sulfolobus tokodaii), this protein is Sulfur carrier protein FdhD.